The primary structure comprises 392 residues: Probable glucan endo-1,6-beta-glucosidase B (392 aa).

A signal peptide spans methionine 1–alanine 18. N-linked (GlcNAc...) asparagine glycosylation is present at asparagine 31. Glutamate 220 functions as the Proton donor in the catalytic mechanism. Residue glutamate 322 is the Nucleophile of the active site.

It belongs to the glycosyl hydrolase 5 (cellulase A) family.

The protein resides in the secreted. It carries out the reaction Random hydrolysis of (1-&gt;6)-linkages in (1-&gt;6)-beta-D-glucans.. Beta-glucanases participate in the metabolism of beta-glucan, the main structural component of the cell wall. Acts on lutean, pustulan and 1,6-oligo-beta-D-glucosides. This Aspergillus flavus (strain ATCC 200026 / FGSC A1120 / IAM 13836 / NRRL 3357 / JCM 12722 / SRRC 167) protein is Probable glucan endo-1,6-beta-glucosidase B (exgB).